The sequence spans 478 residues: Metalloendopeptidase OMA1, mitochondrial (478 aa).

A stress-sensor region region spans residues 134 to 164; sequence LGRSIRKWWVALPANKKQLFREWSWRRRWHF. Residues 163–183 traverse the membrane as a helical segment; sequence HFLGAGTGLLFIASLFFFTHL. His-296 is a binding site for Zn(2+). Glu-297 is a catalytic residue. Positions 300 and 361 each coordinate Zn(2+). Cys-376 and Cys-434 are oxidised to a cystine.

This sequence belongs to the peptidase M48 family. In terms of assembly, homooligomer. It depends on Zn(2+) as a cofactor. In terms of processing, autocatalytically cleaved in response to mitochondrial depolarization both at the N-terminus and C-terminus to generate the short active form (S-OMA1). The S-OMA1 form is unstable. Post-translationally, may form a redox-dependent disulfide bond. Exists in a semi-oxidized state and is activated by prolonged hypoxia.

It localises to the mitochondrion inner membrane. Protease activity is activated upon autocatalytic cleavage in response to mitochondrial depolarization. In terms of biological role, metalloprotease that is part of the quality control system in the inner membrane of mitochondria. Activated in response to various mitochondrial stress, leading to the proteolytic cleavage of target proteins, such as opa1 and dele1. Involved in the fusion of the mitochondrial inner membranes by mediating cleavage of opa1 at S1 position, generating the soluble opa1 (S-opa1), which cooperates with the membrane form (L-opa1) to coordinate the fusion of mitochondrial inner membranes. Following stress conditions that induce loss of mitochondrial membrane potential, mediates cleavage of opa1, leading to excess production of soluble opa1 (S-opa1) and negative regulation of mitochondrial fusion. Also acts as an activator of the integrated stress response (ISR): in response to mitochondrial stress, mediates cleavage of dele1 to generate the processed form of dele1 (S-DELE1), which translocates to the cytosol and activates eif2ak1/hri to trigger the ISR. Required for the stability of the respiratory supercomplexes. The protein is Metalloendopeptidase OMA1, mitochondrial of Danio rerio (Zebrafish).